The primary structure comprises 221 residues: DNA repair and recombination protein RadB (221 aa).

The protein belongs to the eukaryotic RecA-like protein family. RadB subfamily.

In terms of biological role, involved in DNA repair and in homologous recombination. May regulate the cleavage reactions of the branch-structured DNA. Has a very weak ATPase activity that is not stimulated by DNA. Binds DNA but does not promote DNA strands exchange. The sequence is that of DNA repair and recombination protein RadB from Thermococcus gammatolerans (strain DSM 15229 / JCM 11827 / EJ3).